Reading from the N-terminus, the 472-residue chain is Ammonium transporter Rh type C (472 aa).

Topologically, residues 1-9 (MAWNTNLRW) are cytoplasmic. Residues 10–30 (RLPLTCLLLEVVMVILFGVFV) form a helical membrane-spanning segment. At 31 to 51 (RYDFDADAHWWSWRTEFYYRY) the chain is on the extracellular side. Residues 52 to 72 (PSFQDVHVMVFVGFGFLMTFL) traverse the membrane as a helical segment. Residues 73–76 (QRYG) lie on the Cytoplasmic side of the membrane. Residues 77–97 (FSAVGFNFLLAAFGIQWALLM) traverse the membrane as a helical segment. Residues 98 to 114 (QGWFHFLQGRYIVVGVE) are Extracellular-facing. The chain crosses the membrane as a helical span at residues 115-135 (NLINADFCVASVCVAFGAVLG). The Cytoplasmic segment spans residues 136–139 (KVSP). Residues 140 to 160 (IQLLIMTFFQVTLFAVNEFIL) traverse the membrane as a helical segment. The Extracellular segment spans residues 161–168 (LNLLKVKD). The chain crosses the membrane as a helical span at residues 169 to 191 (AGGSMTIHTFGAYFGLTVTRILY). The Cytoplasmic segment spans residues 192-209 (RRNLEQSKERQNSVYQSD). A helical transmembrane segment spans residues 210–230 (LFAMIGTLFLWMYWPSFNSAI). The Extracellular portion of the chain corresponds to 231–241 (SYHGDSQHRAA). Residues 242–262 (INTYCSLAACVLTSVAISSAL) form a helical membrane-spanning segment. The Cytoplasmic portion of the chain corresponds to 263-294 (HKKGKLDMVHIQNATPAGGVAVGTAAEMMLMP). A helical membrane pass occupies residues 295–315 (YGALIVGFVCGIISTLGFVYL). Over 316–336 (TPFLESRLHIQDTCGINNLHG) the chain is Extracellular. The helical transmembrane segment at 337–357 (IPGIIGGIVGAVTAASASLEV) threads the bilayer. The Cytoplasmic portion of the chain corresponds to 358-388 (YGKEGLVHSFDFQGFKRDWTARTQGKFQIYG). The chain crosses the membrane as a helical span at residues 389-409 (LLVTLAMALMGGIIVGVGLIL). Residues 410–450 (RLPFWGQPSDENCFEDAVYWEMPEGNSTVYIPEDPTFKPSG) are Extracellular-facing. An N-linked (GlcNAc...) asparagine glycan is attached at Asn-435. Residues 451-471 (PSVPSVPMVSPLPMASSVPLV) traverse the membrane as a helical segment. Position 472 (Pro-472) is a topological domain, cytoplasmic.

Belongs to the ammonium transporter (TC 2.A.49) family. Rh subfamily. Homotrimer. In terms of processing, N-glycosylated.

It localises to the cell membrane. The protein resides in the apical cell membrane. The enzyme catalyses NH4(+)(in) = NH4(+)(out). The catalysed reaction is methylamine(out) = methylamine(in). It carries out the reaction CO2(out) = CO2(in). Its function is as follows. Ammonium transporter involved in the maintenance of acid-base homeostasis. Transports ammonium and its related derivative methylammonium across the plasma membrane of epithelial cells likely contributing to renal transepithelial ammonia transport and ammonia metabolism. Postulated to primarily mediate an electroneutral bidirectional transport of NH3 ammonia species according to a mechanism that implies interaction of an NH4(+) ion with acidic residues of the pore entry followed by dissociation of NH4(+) into NH3 and H(+). As a result NH3 transits through the central pore and is protonated on the extracellular side reforming NH4(+). May act as a CO2 channel providing for renal acid secretion. This Pongo abelii (Sumatran orangutan) protein is Ammonium transporter Rh type C (RHCG).